Reading from the N-terminus, the 239-residue chain is MIRKKILMAAIPLFVISGADAAVSLDRTRAVFDGSEKSMTLDISNDNKQLPYLAQAWIENENQEKIITGPVIATPPVQRLEPGAKSMVRLSTTPDISKLPQDRESLFYFNLREIPPRSEKANVLQIALQTKIKLFYRPAAIKTRPNEVWQDQLILNKVSGGYRIENPTPYYVTVIGLGGSEKQAEEGEFETVMLSPRSEQTVKSANYNTPYLSYINDYGGRPVLSFICNGSRCSVKKEK.

An N-terminal signal peptide occupies residues 1-21 (MIRKKILMAAIPLFVISGADA). Cysteine 228 and cysteine 233 are oxidised to a cystine.

It belongs to the periplasmic pilus chaperone family. As to quaternary structure, interacts with substrates PapG and PapK.

It localises to the periplasm. Its function is as follows. Binds and caps interactive surfaces on P pilus subunits to prevent them from participating in non-productive interactions. Facilitates the import of P pilus subunits into the periplasm, probably also facilitates their folding. Chaperone-subunit complexes are then targeted to the PapC outer membrane usher where the chaperone must uncap from the subunits. Coexpression of this chaperone with individual, otherwise toxic, P pilus subunits (tested with PapA, PapE and PapG) suppresses their growth inhibitory phenotype. This Escherichia coli protein is Chaperone protein PapD (papD).